The sequence spans 123 residues: DNA-directed RNA polymerase subunit omega (123 aa).

A disordered region spans residues 67-123 (EESAADSLSLGGFSTADVEAEVGGGPVQPDPGASQERAFDEAADGTAQGSGDPDPTT).

The protein belongs to the RNA polymerase subunit omega family. In terms of assembly, the RNAP catalytic core consists of 2 alpha, 1 beta, 1 beta' and 1 omega subunit. When a sigma factor is associated with the core the holoenzyme is formed, which can initiate transcription.

It carries out the reaction RNA(n) + a ribonucleoside 5'-triphosphate = RNA(n+1) + diphosphate. Functionally, promotes RNA polymerase assembly. Latches the N- and C-terminal regions of the beta' subunit thereby facilitating its interaction with the beta and alpha subunits. The chain is DNA-directed RNA polymerase subunit omega from Halorhodospira halophila (strain DSM 244 / SL1) (Ectothiorhodospira halophila (strain DSM 244 / SL1)).